A 505-amino-acid polypeptide reads, in one-letter code: T-cell activation inhibitor, mitochondrial (505 aa).

Positions Leu216 to Arg243 form a coiled coil.

As to expression, expressed in peripheral blood leukocytes, mainly in T-lymphocytes.

It localises to the mitochondrion. Functionally, may regulate T-cell apoptosis. This is T-cell activation inhibitor, mitochondrial (Tcaim) from Rattus norvegicus (Rat).